The chain runs to 92 residues: Small ribosomal subunit protein uS19 (92 aa).

It belongs to the universal ribosomal protein uS19 family.

Functionally, protein S19 forms a complex with S13 that binds strongly to the 16S ribosomal RNA. The polypeptide is Small ribosomal subunit protein uS19 (Clostridium botulinum (strain Eklund 17B / Type B)).